Here is a 461-residue protein sequence, read N- to C-terminus: Elongation factor 1-alpha (461 aa).

Glycine 2 is modified (n,N,N-trimethylglycine). At lysine 3 the chain carries N6,N6-dimethyllysine; alternate. N6-methyllysine; alternate is present on lysine 3. A tr-type G domain is found at 6–241 (KTHINVVVIG…DSIEPPKRPT (236 aa)). Residues 15 to 22 (GHVDSGKS) are G1. Residue 15-22 (GHVDSGKS) coordinates GTP. At lysine 31 the chain carries N6-methyllysine. The tract at residues 71 to 75 (GITID) is G2. Residue lysine 80 is modified to N6,N6,N6-trimethyllysine. The interval 92–95 (DAPG) is G3. Residues 92 to 96 (DAPGH) and 154 to 157 (NKMD) contribute to the GTP site. A G4 region spans residues 154-157 (NKMD). Residues 193-195 (SGF) are G5. Residue lysine 317 is modified to N6,N6-dimethyllysine; alternate. Lysine 317 is subject to N6-methyllysine; alternate. Lysine 391 carries the post-translational modification N6-methyllysine.

This sequence belongs to the TRAFAC class translation factor GTPase superfamily. Classic translation factor GTPase family. EF-Tu/EF-1A subfamily.

It localises to the cytoplasm. Functionally, this protein promotes the GTP-dependent binding of aminoacyl-tRNA to the A-site of ribosomes during protein biosynthesis. The polypeptide is Elongation factor 1-alpha (TEF) (Pseudoechria curvicolla (Podospora curvicolla)).